We begin with the raw amino-acid sequence, 416 residues long: MSKADIIVGIQWGDEGKGKVVDKLCENYDFVCRSAGGHNAGHTIWVNGVRYALHLMPSGVLHPRCINIIGNGVVVSPEVLIAEMAQFENLKGRLYISDRAHLNLKHHSLIDIAKEKLKGKNAIGTTGKGIGPSYADKINRTGHRVGELLEPQRLCEALIKDFEANKTFFEMLEIEIPSAEELLADLKRFNEILTPYITDTTRMLWKALDEDKRVLLEGAQGSMLDIDHGTYPYVTSSSTISAGTLTGLGLNPKEAGNIIGIVKAYATRVGNGAFPTEDKGEDGEKIAQIGKEIGVSTGRKRRCGWFDAVAVRYTARLNGLDALSLMKLDVLDGFEKIKICRAYEYKGMEIDYIPSDLENVQPIYEEMDGWDKVFGIKDYDLLPENAKKYIARLEELAGVKVKYISTSPERDDTIIL.

Residues 13 to 19 and 41 to 43 contribute to the GTP site; these read GDEGKGK and GHT. The active-site Proton acceptor is D14. Positions 14 and 41 each coordinate Mg(2+). IMP-binding positions include 14–17, 39–42, T126, R140, Q220, T235, and R299; these read DEGK and NAGH. H42 acts as the Proton donor in catalysis. Residue 295 to 301 participates in substrate binding; the sequence is VSTGRKR. GTP-binding positions include R301, 327–329, and 405–407; these read KLD and STS.

Belongs to the adenylosuccinate synthetase family. As to quaternary structure, homodimer. Mg(2+) is required as a cofactor.

The protein localises to the cytoplasm. It catalyses the reaction IMP + L-aspartate + GTP = N(6)-(1,2-dicarboxyethyl)-AMP + GDP + phosphate + 2 H(+). It functions in the pathway purine metabolism; AMP biosynthesis via de novo pathway; AMP from IMP: step 1/2. Its function is as follows. Plays an important role in the de novo pathway of purine nucleotide biosynthesis. Catalyzes the first committed step in the biosynthesis of AMP from IMP. The chain is Adenylosuccinate synthetase from Campylobacter jejuni subsp. jejuni serotype O:2 (strain ATCC 700819 / NCTC 11168).